A 373-amino-acid chain; its full sequence is XK-related protein 9 (373 aa).

8 helical membrane-spanning segments follow: residues 8 to 28 (FMMS…DIWV), 38 to 58 (YVFS…AQCF), 166 to 186 (AAIM…QVAL), 203 to 223 (ITYL…VVLL), 224 to 244 (LFLN…LGII), 256 to 276 (CISM…FTFF), 295 to 315 (VLGT…IFNP), and 318 to 338 (FIPI…FLIV).

Belongs to the XK family. Undergoes proteolytic processing by caspase-3 (CASP3), caspase-6 (CASP6) and caspase-7 (CASP7) to generate the XK-related protein 9, processed form, leading to its activation.

The protein resides in the cell membrane. The enzyme catalyses a 1,2-diacyl-sn-glycero-3-phospho-L-serine(in) = a 1,2-diacyl-sn-glycero-3-phospho-L-serine(out). Its activity is regulated as follows. Activated upon caspase cleavage to generate the XK-related protein 9, processed form. Does not act prior the onset of apoptosis. In terms of biological role, phospholipid scramblase that promotes phosphatidylserine exposure on apoptotic cell surface. Phosphatidylserine is a specific marker only present at the surface of apoptotic cells and acts as a specific signal for engulfment. In Pan troglodytes (Chimpanzee), this protein is XK-related protein 9.